We begin with the raw amino-acid sequence, 215 residues long: Phosphatidylserine decarboxylase proenzyme (215 aa).

S181 acts as the Schiff-base intermediate with substrate; via pyruvic acid in catalysis. S181 is modified (pyruvic acid (Ser); by autocatalysis).

This sequence belongs to the phosphatidylserine decarboxylase family. PSD-A subfamily. Heterodimer of a large membrane-associated beta subunit and a small pyruvoyl-containing alpha subunit. Pyruvate serves as cofactor. In terms of processing, is synthesized initially as an inactive proenzyme. Formation of the active enzyme involves a self-maturation process in which the active site pyruvoyl group is generated from an internal serine residue via an autocatalytic post-translational modification. Two non-identical subunits are generated from the proenzyme in this reaction, and the pyruvate is formed at the N-terminus of the alpha chain, which is derived from the carboxyl end of the proenzyme. The post-translation cleavage follows an unusual pathway, termed non-hydrolytic serinolysis, in which the side chain hydroxyl group of the serine supplies its oxygen atom to form the C-terminus of the beta chain, while the remainder of the serine residue undergoes an oxidative deamination to produce ammonia and the pyruvoyl prosthetic group on the alpha chain.

The protein resides in the cell membrane. It carries out the reaction a 1,2-diacyl-sn-glycero-3-phospho-L-serine + H(+) = a 1,2-diacyl-sn-glycero-3-phosphoethanolamine + CO2. It participates in phospholipid metabolism; phosphatidylethanolamine biosynthesis; phosphatidylethanolamine from CDP-diacylglycerol: step 2/2. Its function is as follows. Catalyzes the formation of phosphatidylethanolamine (PtdEtn) from phosphatidylserine (PtdSer). This is Phosphatidylserine decarboxylase proenzyme from Polynucleobacter asymbioticus (strain DSM 18221 / CIP 109841 / QLW-P1DMWA-1) (Polynucleobacter necessarius subsp. asymbioticus).